A 679-amino-acid chain; its full sequence is Pollen receptor-like kinase 4 (679 aa).

The signal sequence occupies residues 1–39 (MLTWETPVMLASNTASTKKLAFITTFLIIVLCPVTMVMS). 5 LRR repeats span residues 118 to 141 (IKNLRTLSFMNNKFNGSMPSVKNF), 142 to 165 (GALKSLYLSNNRFTGEIPADAFDG), 167 to 191 (HHLKKLLLANNAFRGSIPSSLAYLP), 193 to 217 (LLELRLNGNQFHGEIPYFKQKDLKL), and 234 to 257 (SNMDPVSFSGNKNLCGPPLSPCSS). Positions 252-269 (LSPCSSDSGSSPDLPSSP) are enriched in low complexity. The tract at residues 252–271 (LSPCSSDSGSSPDLPSSPTE) is disordered. A helical transmembrane segment spans residues 278–298 (FFIIAIVLIVIGIILMIISLV). Positions 311–344 (SAYPSAGQDRTEKYNYDQSTDKDKAADSVTSYTS) are disordered. Positions 319 to 336 (DRTEKYNYDQSTDKDKAA) are enriched in basic and acidic residues. Positions 372–646 (RASAEVLGSG…RDAVEKIERL (275 aa)) constitute a Protein kinase domain. Ser-374 carries the post-translational modification Phosphoserine. ATP contacts are provided by residues 378–386 (LGSGSFGSS) and Lys-400. Phosphoserine is present on residues Ser-452 and Ser-455. At Thr-472 the chain carries Phosphothreonine. Tyr-542 bears the Phosphotyrosine mark.

The protein belongs to the protein kinase superfamily. Ser/Thr protein kinase family. In terms of assembly, interacts in vitro with ROPGEF1 (via PRONE domain). Interacts weakly with the GRI peptide. Expressed in pollen and/or in flowers, but not in leaves.

The protein localises to the membrane. It catalyses the reaction L-seryl-[protein] + ATP = O-phospho-L-seryl-[protein] + ADP + H(+). The catalysed reaction is L-threonyl-[protein] + ATP = O-phospho-L-threonyl-[protein] + ADP + H(+). In terms of biological role, receptor-like kinase involved in the control of pollen germination and pollen tube polar growth. Can phosphorylate ROPGEF1 in vitro. The polypeptide is Pollen receptor-like kinase 4 (Arabidopsis thaliana (Mouse-ear cress)).